The chain runs to 353 residues: Peptide-N(4)-(N-acetyl-beta-glucosaminyl)asparagine amidase (353 aa).

3 residues coordinate Zn(2+): Cys125, Cys128, and Cys159. Cys185 acts as the Nucleophile in catalysis. Catalysis depends on residues His212 and Asp229. Substrate is bound at residue Glu232. Residues 316 to 353 (SLEKTKPSKDTSTTTLTGTKGRESGSTAWKQQRGEDGS) are disordered. The segment covering 325–334 (DTSTTTLTGT) has biased composition (low complexity).

Belongs to the transglutaminase-like superfamily. PNGase family. The cofactor is Zn(2+).

The protein resides in the cytoplasm. The catalysed reaction is Hydrolysis of an N(4)-(acetyl-beta-D-glucosaminyl)asparagine residue in which the glucosamine residue may be further glycosylated, to yield a (substituted) N-acetyl-beta-D-glucosaminylamine and a peptide containing an aspartate residue.. Its function is as follows. Specifically deglycosylates the denatured form of N-linked glycoproteins in the cytoplasm and assists their proteasome-mediated degradation. Cleaves the beta-aspartyl-glucosamine (GlcNAc) of the glycan and the amide side chain of Asn, converting Asn to Asp. Prefers proteins containing high-mannose over those bearing complex type oligosaccharides. Can recognize misfolded proteins in the endoplasmic reticulum that are exported to the cytosol to be destroyed and deglycosylate them, while it has no activity toward native proteins. Deglycosylation is a prerequisite for subsequent proteasome-mediated degradation of some, but not all, misfolded glycoproteins. This Kluyveromyces lactis (strain ATCC 8585 / CBS 2359 / DSM 70799 / NBRC 1267 / NRRL Y-1140 / WM37) (Yeast) protein is Peptide-N(4)-(N-acetyl-beta-glucosaminyl)asparagine amidase (PNG1).